The primary structure comprises 242 residues: ATP synthase subunit a (242 aa).

6 helical membrane passes run Ser29–Tyr49, Phe84–Thr104, Ile114–Ile134, Phe140–Ile160, Met181–Leu201, and Phe203–Gln223.

The protein belongs to the ATPase A chain family. In terms of assembly, F-type ATPases have 2 components, CF(1) - the catalytic core - and CF(0) - the membrane proton channel. CF(1) has five subunits: alpha(3), beta(3), gamma(1), delta(1), epsilon(1). CF(0) has three main subunits: a(1), b(2) and c(9-12). The alpha and beta chains form an alternating ring which encloses part of the gamma chain. CF(1) is attached to CF(0) by a central stalk formed by the gamma and epsilon chains, while a peripheral stalk is formed by the delta and b chains.

The protein localises to the cell inner membrane. Functionally, key component of the proton channel; it plays a direct role in the translocation of protons across the membrane. This chain is ATP synthase subunit a, found in Rickettsia typhi (strain ATCC VR-144 / Wilmington).